A 190-amino-acid polypeptide reads, in one-letter code: Segregation and condensation protein B (190 aa).

This sequence belongs to the ScpB family. Homodimer. Homodimerization may be required to stabilize the binding of ScpA to the Smc head domains. Component of a cohesin-like complex composed of ScpA, ScpB and the Smc homodimer, in which ScpA and ScpB bind to the head domain of Smc. The presence of the three proteins is required for the association of the complex with DNA.

The protein localises to the cytoplasm. Its function is as follows. Participates in chromosomal partition during cell division. May act via the formation of a condensin-like complex containing Smc and ScpA that pull DNA away from mid-cell into both cell halves. This is Segregation and condensation protein B from Alkaliphilus metalliredigens (strain QYMF).